Consider the following 146-residue polypeptide: Small ribosomal subunit protein uS9 (146 aa).

It belongs to the universal ribosomal protein uS9 family. Component of the small ribosomal subunit.

Its subcellular location is the cytoplasm. Functionally, component of the small ribosomal subunit. The ribosome is a large ribonucleoprotein complex responsible for the synthesis of proteins in the cell. This is Small ribosomal subunit protein uS9 (rps16) from Ictalurus punctatus (Channel catfish).